An 875-amino-acid chain; its full sequence is Probable ATP-dependent RNA helicase DDX10 (875 aa).

Residues 1–44 are disordered; the sequence is MGKTVASLGQGTRPDPVRSFNRWKKKHSHRQHQKKERRKQLKKP. Thr4 is modified (phosphothreonine). Residue Ser7 is modified to Phosphoserine. The segment covering 21-41 has biased composition (basic residues); it reads NRWKKKHSHRQHQKKERRKQL. The Q motif signature appears at 69-97; sequence TRFSDFPLSKKTLKGLQEAQYRLVTEIQK. Residues 89 to 91, Gln96, and 113 to 120 contribute to the ATP site; these read YRL and AKTGSGKT. In terms of domain architecture, Helicase ATP-binding spans 100-274; sequence IGLALQGKDV…RLSLKDPEYV (175 aa). Positions 222-225 match the DEAD box motif; it reads DEAD. Residues 300 to 449 form the Helicase C-terminal domain; it reads KISVLFSFLR…EIKINPEKLI (150 aa). Positions 525 to 612 are disordered; it reads LVKNPVTEAV…HTESVVSIEE (88 aa). Ser540 bears the Phosphoserine mark. Position 556 is an N6-acetyllysine (Lys556). The span at 562 to 575 shows a compositional bias: basic and acidic residues; the sequence is KSGERLEETEHRLA. A compositionally biased stretch (acidic residues) spans 578 to 593; the sequence is DGDEEQDEETEDEETE. Thr587 carries the post-translational modification Phosphothreonine. Basic and acidic residues predominate over residues 594–604; sequence DHLGKAREPHT. Lys652 participates in a covalent cross-link: Glycyl lysine isopeptide (Lys-Gly) (interchain with G-Cter in SUMO2). A compositionally biased stretch (basic and acidic residues) spans 734–744; that stretch reads EEDKFDKEEYR. Residues 734–860 are disordered; that stretch reads EEDKFDKEEY…VEPLDTGLSL (127 aa). A compositionally biased stretch (basic residues) spans 745–754; sequence KKIKAKHRER. Basic and acidic residues predominate over residues 755 to 774; that stretch reads RLKEREARREANKRQAKARD. Over residues 775 to 789 the composition is skewed to acidic residues; that stretch reads EEEAFLDWSDEDDGG. A Phosphoserine modification is found at Ser783. Residues 797 to 831 show a composition bias toward basic and acidic residues; sequence DPDKHRSSEESESEDTNHKMSDTKKKQETRKRNNT.

This sequence belongs to the DEAD box helicase family. DDX10/DBP4 subfamily. As to quaternary structure, interacts with AIM2; this interaction promotes AIM2 stability. Interacts with SCNA; this interaction causes DDX10 mislocalization to the nucleoplasm and cytoplasmic inclusions.

The protein localises to the cytoplasm. It localises to the nucleus. It is found in the nucleolus. It carries out the reaction ATP + H2O = ADP + phosphate + H(+). Its function is as follows. Putative ATP-dependent RNA helicase that plays various role in innate immunity or inflammation. Plays a role in the enhancement of AIM2-induced inflammasome activation by interacting with AIM2 and stabilizing its protein level. Negatively regulates viral infection by promoting interferon beta production and interferon stimulated genes/ISGs expression. The sequence is that of Probable ATP-dependent RNA helicase DDX10 (Ddx10) from Mus musculus (Mouse).